The sequence spans 409 residues: Epoxyqueuosine reductase (409 aa).

Residues 1–23 (MDRNPELAIADARPSQDGRAAPS) form a disordered region. Asp178 (proton donor) is an active-site residue. Residues 232-261 (AAPETPGAHCGSCTRCLGACPTGAIVAPYR) enclose the 4Fe-4S ferredoxin-type domain. Residues Cys241, Cys244, Cys247, Cys251, Cys267, Cys294, Cys297, and Cys301 each contribute to the [4Fe-4S] cluster site.

The protein belongs to the QueG family. In terms of assembly, monomer. Requires cob(II)alamin as cofactor. [4Fe-4S] cluster is required as a cofactor.

It is found in the cytoplasm. The enzyme catalyses epoxyqueuosine(34) in tRNA + AH2 = queuosine(34) in tRNA + A + H2O. Its pathway is tRNA modification; tRNA-queuosine biosynthesis. Functionally, catalyzes the conversion of epoxyqueuosine (oQ) to queuosine (Q), which is a hypermodified base found in the wobble positions of tRNA(Asp), tRNA(Asn), tRNA(His) and tRNA(Tyr). This is Epoxyqueuosine reductase from Burkholderia pseudomallei (strain K96243).